The chain runs to 240 residues: MCTLFIADLHLSEHEPAITAGFLRFLQEQAIHANALYILGDFFDFWIGDDDPNPLHQRIAQALMALKNAGVPCYFIHGNRDFLIGSRFAKESGMTLLPQEKVLEIEQHRILILHGDTLCTDDDAYQRYRKKVHNKFIQRLFLLLPLTIRLRIAKKMRSRSQSSNQYKSEAIMDVNAQAVINTFKQFNTQWMIHGHTHRPAIHTVDIDGKPHYRGVLGAWHTEGSMFKVTSDKIELIQFPF.

Residues aspartate 8, histidine 10, aspartate 41, asparagine 79, and histidine 114 each contribute to the Mn(2+) site. Position 79-80 (79-80 (NR)) interacts with substrate. 5 residues coordinate substrate: aspartate 122, serine 160, asparagine 164, lysine 167, and histidine 195. 2 residues coordinate Mn(2+): histidine 195 and histidine 197.

Belongs to the LpxH family. It depends on Mn(2+) as a cofactor.

It is found in the cell inner membrane. The catalysed reaction is UDP-2-N,3-O-bis[(3R)-3-hydroxytetradecanoyl]-alpha-D-glucosamine + H2O = 2-N,3-O-bis[(3R)-3-hydroxytetradecanoyl]-alpha-D-glucosaminyl 1-phosphate + UMP + 2 H(+). Its pathway is glycolipid biosynthesis; lipid IV(A) biosynthesis; lipid IV(A) from (3R)-3-hydroxytetradecanoyl-[acyl-carrier-protein] and UDP-N-acetyl-alpha-D-glucosamine: step 4/6. In terms of biological role, hydrolyzes the pyrophosphate bond of UDP-2,3-diacylglucosamine to yield 2,3-diacylglucosamine 1-phosphate (lipid X) and UMP by catalyzing the attack of water at the alpha-P atom. Involved in the biosynthesis of lipid A, a phosphorylated glycolipid that anchors the lipopolysaccharide to the outer membrane of the cell. The chain is UDP-2,3-diacylglucosamine hydrolase from Proteus mirabilis (strain HI4320).